The primary structure comprises 232 residues: Phosphatidylserine decarboxylase proenzyme (232 aa).

Ser-190 acts as the Schiff-base intermediate with substrate; via pyruvic acid in catalysis. The residue at position 190 (Ser-190) is a Pyruvic acid (Ser); by autocatalysis.

It belongs to the phosphatidylserine decarboxylase family. PSD-A subfamily. As to quaternary structure, heterodimer of a large membrane-associated beta subunit and a small pyruvoyl-containing alpha subunit. Requires pyruvate as cofactor. Is synthesized initially as an inactive proenzyme. Formation of the active enzyme involves a self-maturation process in which the active site pyruvoyl group is generated from an internal serine residue via an autocatalytic post-translational modification. Two non-identical subunits are generated from the proenzyme in this reaction, and the pyruvate is formed at the N-terminus of the alpha chain, which is derived from the carboxyl end of the proenzyme. The post-translation cleavage follows an unusual pathway, termed non-hydrolytic serinolysis, in which the side chain hydroxyl group of the serine supplies its oxygen atom to form the C-terminus of the beta chain, while the remainder of the serine residue undergoes an oxidative deamination to produce ammonia and the pyruvoyl prosthetic group on the alpha chain.

It is found in the cell membrane. The enzyme catalyses a 1,2-diacyl-sn-glycero-3-phospho-L-serine + H(+) = a 1,2-diacyl-sn-glycero-3-phosphoethanolamine + CO2. It participates in phospholipid metabolism; phosphatidylethanolamine biosynthesis; phosphatidylethanolamine from CDP-diacylglycerol: step 2/2. In terms of biological role, catalyzes the formation of phosphatidylethanolamine (PtdEtn) from phosphatidylserine (PtdSer). This chain is Phosphatidylserine decarboxylase proenzyme, found in Rhizobium etli (strain ATCC 51251 / DSM 11541 / JCM 21823 / NBRC 15573 / CFN 42).